The primary structure comprises 588 residues: WD repeat-containing protein DDB_G0349043 (588 aa).

The tract at residues 1–32 is disordered; sequence MPLDNKVQLNENGKEVNNNNNNDEDLKIQDNH. A LisH domain is found at 40 to 72; the sequence is NRSELVRLLIQSLNSLGYDKSAEFLEKDSGISL. The CTLH domain occupies 73–129; it reads QSKEINQFSECVVSGDWNKVEELLPFLKLNEFDTNNVKFLVYSQKFLEYLENHKIKE. WD repeat units follow at residues 244 to 283, 294 to 333, and 336 to 375; these read KHRD…LDQP, GHTK…LLKT, and KHSD…LTNS. Residues 376–403 form a disordered region; it reads NNNNNNHNNNNSNINGNSINGSNNNGNN. WD repeat units lie at residues 413 to 452, 455 to 494, 499 to 539, and 542 to 582; these read WACA…TPEV, METD…IVQK, KQGR…LLET, and RHSG…NSFI.

In Dictyostelium discoideum (Social amoeba), this protein is WD repeat-containing protein DDB_G0349043.